The sequence spans 290 residues: Glycine--tRNA ligase alpha subunit (290 aa).

This sequence belongs to the class-II aminoacyl-tRNA synthetase family. As to quaternary structure, tetramer of two alpha and two beta subunits.

It localises to the cytoplasm. The catalysed reaction is tRNA(Gly) + glycine + ATP = glycyl-tRNA(Gly) + AMP + diphosphate. The sequence is that of Glycine--tRNA ligase alpha subunit from Syntrophotalea carbinolica (strain DSM 2380 / NBRC 103641 / GraBd1) (Pelobacter carbinolicus).